The sequence spans 341 residues: Glycerol-3-phosphate dehydrogenase [NAD(P)+] (341 aa).

NADPH-binding residues include S15, W16, R36, and K110. Residues K110, G139, and S141 each coordinate sn-glycerol 3-phosphate. A143 provides a ligand contact to NADPH. 5 residues coordinate sn-glycerol 3-phosphate: K194, D247, S257, R258, and N259. K194 (proton acceptor) is an active-site residue. An NADPH-binding site is contributed by R258. Residues V282 and E284 each coordinate NADPH.

This sequence belongs to the NAD-dependent glycerol-3-phosphate dehydrogenase family.

It localises to the cytoplasm. The catalysed reaction is sn-glycerol 3-phosphate + NAD(+) = dihydroxyacetone phosphate + NADH + H(+). The enzyme catalyses sn-glycerol 3-phosphate + NADP(+) = dihydroxyacetone phosphate + NADPH + H(+). It functions in the pathway membrane lipid metabolism; glycerophospholipid metabolism. Catalyzes the reduction of the glycolytic intermediate dihydroxyacetone phosphate (DHAP) to sn-glycerol 3-phosphate (G3P), the key precursor for phospholipid synthesis. The protein is Glycerol-3-phosphate dehydrogenase [NAD(P)+] of Xanthomonas oryzae pv. oryzae (strain MAFF 311018).